The sequence spans 720 residues: Translation initiation factor IF-2 (720 aa).

The interval 48 to 138 is disordered; that stretch reads KKFKASQAKD…NEVEETKEMP (91 aa). Low complexity-rich tracts occupy residues 60-75 and 99-113; these read KQNT…NKQN and KGKQ…NKNQ. The span at 114-123 shows a compositional bias: basic residues; that stretch reads KNNKNKKNNK. One can recognise a tr-type G domain in the interval 222-391; that stretch reads ERPAVVTIMG…GLVAEVQELK (170 aa). The interval 231 to 238 is G1; sequence GHVDHGKT. 231–238 lines the GTP pocket; that stretch reads GHVDHGKT. A G2 region spans residues 256–260; sequence GITQH. A G3 region spans residues 277 to 280; the sequence is DTPG. Residues 277–281 and 331–334 contribute to the GTP site; these read DTPGH and NKID. The interval 331 to 334 is G4; that stretch reads NKID. The tract at residues 367-369 is G5; it reads SAL.

Belongs to the TRAFAC class translation factor GTPase superfamily. Classic translation factor GTPase family. IF-2 subfamily.

Its subcellular location is the cytoplasm. Its function is as follows. One of the essential components for the initiation of protein synthesis. Protects formylmethionyl-tRNA from spontaneous hydrolysis and promotes its binding to the 30S ribosomal subunits. Also involved in the hydrolysis of GTP during the formation of the 70S ribosomal complex. This Staphylococcus epidermidis (strain ATCC 35984 / DSM 28319 / BCRC 17069 / CCUG 31568 / BM 3577 / RP62A) protein is Translation initiation factor IF-2.